We begin with the raw amino-acid sequence, 377 residues long: 2-iminoacetate synthase (377 aa).

The region spanning 71–301 (NTVSFYVPLY…PEIELSLSTR (231 aa)) is the Radical SAM core domain. Cys85, Cys89, and Cys92 together coordinate [4Fe-4S] cluster.

The protein belongs to the radical SAM superfamily. ThiH family. As to quaternary structure, forms a heterodimer with ThiG. The cofactor is [4Fe-4S] cluster.

It catalyses the reaction L-tyrosine + S-adenosyl-L-methionine + NADPH = 2-iminoacetate + 4-methylphenol + 5'-deoxyadenosine + L-methionine + NADP(+). Its pathway is cofactor biosynthesis; thiamine diphosphate biosynthesis. In terms of biological role, catalyzes the radical-mediated cleavage of tyrosine to 2-iminoacetate and 4-cresol. The chain is 2-iminoacetate synthase (thiH) from Salmonella typhimurium (strain LT2 / SGSC1412 / ATCC 700720).